The primary structure comprises 411 residues: Serine hydroxymethyltransferase (411 aa).

Residues L119 and 123 to 125 (GHL) each bind (6S)-5,6,7,8-tetrahydrofolate. K228 carries the N6-(pyridoxal phosphate)lysine modification. 351–353 (SPF) serves as a coordination point for (6S)-5,6,7,8-tetrahydrofolate.

Belongs to the SHMT family. In terms of assembly, homodimer. Pyridoxal 5'-phosphate serves as cofactor.

Its subcellular location is the cytoplasm. It carries out the reaction (6R)-5,10-methylene-5,6,7,8-tetrahydrofolate + glycine + H2O = (6S)-5,6,7,8-tetrahydrofolate + L-serine. The protein operates within one-carbon metabolism; tetrahydrofolate interconversion. It participates in amino-acid biosynthesis; glycine biosynthesis; glycine from L-serine: step 1/1. In terms of biological role, catalyzes the reversible interconversion of serine and glycine with tetrahydrofolate (THF) serving as the one-carbon carrier. This reaction serves as the major source of one-carbon groups required for the biosynthesis of purines, thymidylate, methionine, and other important biomolecules. Also exhibits THF-independent aldolase activity toward beta-hydroxyamino acids, producing glycine and aldehydes, via a retro-aldol mechanism. The protein is Serine hydroxymethyltransferase of Clostridium botulinum (strain Alaska E43 / Type E3).